The chain runs to 96 residues: Aspartyl/glutamyl-tRNA(Asn/Gln) amidotransferase subunit C (96 aa).

Belongs to the GatC family. Heterotrimer of A, B and C subunits.

The catalysed reaction is L-glutamyl-tRNA(Gln) + L-glutamine + ATP + H2O = L-glutaminyl-tRNA(Gln) + L-glutamate + ADP + phosphate + H(+). It carries out the reaction L-aspartyl-tRNA(Asn) + L-glutamine + ATP + H2O = L-asparaginyl-tRNA(Asn) + L-glutamate + ADP + phosphate + 2 H(+). In terms of biological role, allows the formation of correctly charged Asn-tRNA(Asn) or Gln-tRNA(Gln) through the transamidation of misacylated Asp-tRNA(Asn) or Glu-tRNA(Gln) in organisms which lack either or both of asparaginyl-tRNA or glutaminyl-tRNA synthetases. The reaction takes place in the presence of glutamine and ATP through an activated phospho-Asp-tRNA(Asn) or phospho-Glu-tRNA(Gln). The sequence is that of Aspartyl/glutamyl-tRNA(Asn/Gln) amidotransferase subunit C from Deinococcus deserti (strain DSM 17065 / CIP 109153 / LMG 22923 / VCD115).